Here is a 351-residue protein sequence, read N- to C-terminus: MAKLRVGLLFGGRSGEHEVSLNSAKAIATALQSGENPQKYDIIPIYIQKNGVWQAGDTAQQVLNDAKPLPCEDATSQQLWTFPPQVSEVDVWFPILHGPNGEDGTLQGLLTLMQTPFVGSGVLGSAVGMDKIAMKMAFAQAGLPQVKYIAVDRAQIWSNPCVFPKLCDEIEQRLGYPCFVKPANLGSSVGIAKVRSRSELEKALDSAASYDRRIVIETGVKAREVECAVLGNENPKASVIGEITYNSDFYDYEAKYTDGMAQMHIPAQLPDAIVTQIQDMAIQAFKAVDGAGLARVDFFYVEDSQEVFINEINTLPGFTAFSMYPQLWKETGVPFAELVDQLIQLALERKQ.

Positions 135 to 344 (KMAFAQAGLP…FAELVDQLIQ (210 aa)) constitute an ATP-grasp domain. 171 to 226 (EQRLGYPCFVKPANLGSSVGIAKVRSRSELEKALDSAASYDRRIVIETGVKAREVE) contributes to the ATP binding site. Positions 297, 311, and 313 each coordinate Mg(2+).

This sequence belongs to the D-alanine--D-alanine ligase family. The cofactor is Mg(2+). It depends on Mn(2+) as a cofactor.

Its subcellular location is the cytoplasm. It catalyses the reaction 2 D-alanine + ATP = D-alanyl-D-alanine + ADP + phosphate + H(+). It participates in cell wall biogenesis; peptidoglycan biosynthesis. Its function is as follows. Cell wall formation. In Rippkaea orientalis (strain PCC 8801 / RF-1) (Cyanothece sp. (strain PCC 8801)), this protein is D-alanine--D-alanine ligase.